The following is a 293-amino-acid chain: Ankyrin repeat and SOCS box protein 11 (293 aa).

7 ANK repeats span residues 36–65, 69–98, 102–131, 134–163, 167–196, 199–228, and 232–259; these read DDRT…NVGM, DGIT…DANA, DGAT…AHHP, LLCS…NVDM, SVGT…DVQC, GLDT…DRTS, and EGKT…SLSQ. Residues 244–293 enclose the SOCS box domain; the sequence is SIKHLLQTAGTCSLSQLCRWCIRRSLGQKGLNKTKTLCLPHMLHNYLLYH.

This sequence belongs to the ankyrin SOCS box (ASB) family. In terms of assembly, substrate-recognition component of the ECS(ASB11) complex, composed of asb11, cul5, elob, eloc and rnf7/rbx2. As to expression, expressed in the developing nervous system: localizes to neural plate margins and is abutting the proneuronal zone.

The protein resides in the endoplasmic reticulum. Its pathway is protein modification; protein ubiquitination. In terms of biological role, substrate-recognition component of a cullin-5-RING E3 ubiquitin-protein ligase complex (ECS complex, also named CRL5 complex), which mediates the ubiquitination and subsequent proteasomal degradation of target proteins. Acts as a regulator of the neuronal progenitor compartment size by maintaining the neural precursors in the proliferating undifferentiated state. The ECS(ASB11) complex acts as a positive regulator of Notch signaling pathway by mediating ubiquitination and degradation of DeltaA (dla). Also acts as a regulator of regenerative myogenesis. This is Ankyrin repeat and SOCS box protein 11 from Danio rerio (Zebrafish).